Reading from the N-terminus, the 341-residue chain is Methionine import ATP-binding protein MetN (341 aa).

An ABC transporter domain is found at Ile-2 to Tyr-237. Gly-34–Ser-41 contacts ATP.

The protein belongs to the ABC transporter superfamily. Methionine importer (TC 3.A.1.24) family. The complex is composed of two ATP-binding proteins (MetN), two transmembrane proteins (MetI) and a solute-binding protein (MetQ).

It localises to the cell inner membrane. The catalysed reaction is L-methionine(out) + ATP + H2O = L-methionine(in) + ADP + phosphate + H(+). It catalyses the reaction D-methionine(out) + ATP + H2O = D-methionine(in) + ADP + phosphate + H(+). In terms of biological role, part of the ABC transporter complex MetNIQ involved in methionine import. Responsible for energy coupling to the transport system. This Legionella pneumophila (strain Paris) protein is Methionine import ATP-binding protein MetN.